Consider the following 292-residue polypeptide: Shikimate dehydrogenase (NADP(+)) (292 aa).

Shikimate is bound by residues 22–24 (SLS) and Ser-69. Lys-73 serves as the catalytic Proton acceptor. Positions 94 and 111 each coordinate shikimate. NADP(+)-binding positions include 135 to 139 (GVGGA) and Ile-236. Residue Tyr-238 coordinates shikimate. Gly-260 is a binding site for NADP(+).

The protein belongs to the shikimate dehydrogenase family. As to quaternary structure, homodimer.

It catalyses the reaction shikimate + NADP(+) = 3-dehydroshikimate + NADPH + H(+). Its pathway is metabolic intermediate biosynthesis; chorismate biosynthesis; chorismate from D-erythrose 4-phosphate and phosphoenolpyruvate: step 4/7. Functionally, involved in the biosynthesis of the chorismate, which leads to the biosynthesis of aromatic amino acids. Catalyzes the reversible NADPH linked reduction of 3-dehydroshikimate (DHSA) to yield shikimate (SA). This is Shikimate dehydrogenase (NADP(+)) from Streptococcus pyogenes serotype M28 (strain MGAS6180).